Consider the following 179-residue polypeptide: Large ribosomal subunit protein uL5 (179 aa).

This sequence belongs to the universal ribosomal protein uL5 family. In terms of assembly, part of the 50S ribosomal subunit; part of the 5S rRNA/L5/L18/L25 subcomplex. Contacts the 5S rRNA and the P site tRNA. Forms a bridge to the 30S subunit in the 70S ribosome.

This is one of the proteins that bind and probably mediate the attachment of the 5S RNA into the large ribosomal subunit, where it forms part of the central protuberance. In the 70S ribosome it contacts protein S13 of the 30S subunit (bridge B1b), connecting the 2 subunits; this bridge is implicated in subunit movement. Contacts the P site tRNA; the 5S rRNA and some of its associated proteins might help stabilize positioning of ribosome-bound tRNAs. This is Large ribosomal subunit protein uL5 from Synechococcus elongatus (strain ATCC 33912 / PCC 7942 / FACHB-805) (Anacystis nidulans R2).